We begin with the raw amino-acid sequence, 65 residues long: Large ribosomal subunit protein bL35 (65 aa).

The span at 1–45 (MPKMKSHSGAKKRFKKTGNGKIKRKKANKGHLLTKKNAKRKRQLR) shows a compositional bias: basic residues. The interval 1–65 (MPKMKSHSGA…RDRIKRMLST (65 aa)) is disordered. The span at 48–57 (VVVDDKANRD) shows a compositional bias: basic and acidic residues.

The protein belongs to the bacterial ribosomal protein bL35 family.

This chain is Large ribosomal subunit protein bL35, found in Salinibacter ruber (strain DSM 13855 / M31).